The primary structure comprises 796 residues: Lon protease 2 (796 aa).

The Lon N-terminal domain maps to 9–206 (LPIVILKENV…KLIVNLSIEI (198 aa)). 352 to 359 (GPPGIGKT) lines the ATP pocket. Positions 617–796 (IDSSGFVYGL…EEVFDYLNII (180 aa)) constitute a Lon proteolytic domain. Active-site residues include serine 702 and lysine 745.

Belongs to the peptidase S16 family. In terms of assembly, homohexamer. Organized in a ring with a central cavity.

The protein localises to the cytoplasm. It carries out the reaction Hydrolysis of proteins in presence of ATP.. ATP-dependent serine protease that mediates the selective degradation of mutant and abnormal proteins as well as certain short-lived regulatory proteins. Required for cellular homeostasis and for survival from DNA damage and developmental changes induced by stress. Degrades polypeptides processively to yield small peptide fragments that are 5 to 10 amino acids long. Binds to DNA in a double-stranded, site-specific manner. The protein is Lon protease 2 (lon2) of Borreliella burgdorferi (strain ATCC 35210 / DSM 4680 / CIP 102532 / B31) (Borrelia burgdorferi).